Reading from the N-terminus, the 398-residue chain is Protein FAM53A (398 aa).

The tract at residues 85 to 253 (QWQPQSPRPG…TSTPALGGRR (169 aa)) is disordered. Over residues 103–115 (VDPSESTGSSTAP) the composition is skewed to polar residues. Basic and acidic residues predominate over residues 123 to 132 (SLSEPEELVR). Position 125 is a phosphoserine (S125). Composition is skewed to low complexity over residues 176–193 (STGPTSPATPRPSSASGG) and 234–250 (TPLPWASSSPTSTPALG). The Nuclear localization signal signature appears at 268-276 (KRSRRKRRR). Residues S301 and S304 each carry the phosphoserine modification. A disordered region spans residues 336–398 (PGCSQRGLRT…ELDLEQIENN (63 aa)). Over residues 363–375 (GSRRSSGDPRDGD) the composition is skewed to basic and acidic residues.

Belongs to the FAM53 family.

It is found in the nucleus. Functionally, may play an important role in neural development; the dorsomedial roof of the third ventricle. The polypeptide is Protein FAM53A (Homo sapiens (Human)).